Here is a 434-residue protein sequence, read N- to C-terminus: 3-phosphoshikimate 1-carboxyvinyltransferase (434 aa).

3-phosphoshikimate contacts are provided by Lys-22, Ser-23, and Arg-27. Position 22 (Lys-22) interacts with phosphoenolpyruvate. Positions 93 and 121 each coordinate phosphoenolpyruvate. 3-phosphoshikimate is bound by residues Ser-168, Ser-169, Gln-170, Ser-199, Asp-320, and Lys-347. Gln-170 provides a ligand contact to phosphoenolpyruvate. Asp-320 serves as the catalytic Proton acceptor. Phosphoenolpyruvate contacts are provided by Arg-351, Arg-394, and Lys-419.

It belongs to the EPSP synthase family. Monomer.

The protein resides in the cytoplasm. It catalyses the reaction 3-phosphoshikimate + phosphoenolpyruvate = 5-O-(1-carboxyvinyl)-3-phosphoshikimate + phosphate. It participates in metabolic intermediate biosynthesis; chorismate biosynthesis; chorismate from D-erythrose 4-phosphate and phosphoenolpyruvate: step 6/7. Catalyzes the transfer of the enolpyruvyl moiety of phosphoenolpyruvate (PEP) to the 5-hydroxyl of shikimate-3-phosphate (S3P) to produce enolpyruvyl shikimate-3-phosphate and inorganic phosphate. The chain is 3-phosphoshikimate 1-carboxyvinyltransferase from Burkholderia multivorans (strain ATCC 17616 / 249).